Here is a 71-residue protein sequence, read N- to C-terminus: Small ribosomal subunit protein bS18 (71 aa).

The protein belongs to the bacterial ribosomal protein bS18 family. In terms of assembly, part of the 30S ribosomal subunit. Forms a tight heterodimer with protein bS6.

In terms of biological role, binds as a heterodimer with protein bS6 to the central domain of the 16S rRNA, where it helps stabilize the platform of the 30S subunit. The chain is Small ribosomal subunit protein bS18 from Synechococcus elongatus (strain ATCC 33912 / PCC 7942 / FACHB-805) (Anacystis nidulans R2).